Here is a 308-residue protein sequence, read N- to C-terminus: MRHFLSLNELTKDEILYLVDLACRLKSEVKRGFFFPYLKHKALGLIFTKASTRTRVSFEVGINQLGGYSLYLSKNDLQLGRGETIEDTAKVLSRYLDLIVIRTYAQSEVEEFAKYSSIPVINGLTDDYHPTQIIADFQTIFEEKGRLKDLKIAYIGDGNNVAATLLVGASKLGLDIAVATPKGYEIKKEVVDFAKDEAKRSGSNLIFTDNPKEAVKDADVVYTDTWVSMGQEEEKEKRIKDFEGYQVTQELMKLAKEDAIFLHCLPAYRGFEVTPEVIDGPQSKVFDEAENRLHAHKAIMVFVCLGRI.

Carbamoyl phosphate-binding positions include 51-54 (STRT), glutamine 78, arginine 102, and 129-132 (HPTQ). L-ornithine-binding positions include asparagine 160, aspartate 224, and 228 to 229 (SM). Carbamoyl phosphate is bound by residues 264 to 265 (CL) and arginine 292.

This sequence belongs to the aspartate/ornithine carbamoyltransferase superfamily. OTCase family.

It localises to the cytoplasm. It catalyses the reaction carbamoyl phosphate + L-ornithine = L-citrulline + phosphate + H(+). The protein operates within amino-acid biosynthesis; L-arginine biosynthesis; L-arginine from L-ornithine and carbamoyl phosphate: step 1/3. Reversibly catalyzes the transfer of the carbamoyl group from carbamoyl phosphate (CP) to the N(epsilon) atom of ornithine (ORN) to produce L-citrulline. The chain is Ornithine carbamoyltransferase from Caldicellulosiruptor saccharolyticus (strain ATCC 43494 / DSM 8903 / Tp8T 6331).